The sequence spans 159 residues: Phosphopantetheine adenylyltransferase (159 aa).

H16 lines the ATP pocket. Substrate is bound by residues K40, M72, and R86. Residues G87–R89, E97, and Y122–S128 contribute to the ATP site.

This sequence belongs to the bacterial CoaD family. As to quaternary structure, homohexamer. The cofactor is Mg(2+).

The protein resides in the cytoplasm. It carries out the reaction (R)-4'-phosphopantetheine + ATP + H(+) = 3'-dephospho-CoA + diphosphate. It participates in cofactor biosynthesis; coenzyme A biosynthesis; CoA from (R)-pantothenate: step 4/5. Its function is as follows. Reversibly transfers an adenylyl group from ATP to 4'-phosphopantetheine, yielding dephospho-CoA (dPCoA) and pyrophosphate. The polypeptide is Phosphopantetheine adenylyltransferase (Dehalococcoides mccartyi (strain CBDB1)).